A 415-amino-acid polypeptide reads, in one-letter code: Putative transcription factor BOFH (415 aa).

The tract at residues 159-221 (SQEPVQHQDQ…NEGEDDDGMD (63 aa)) is disordered. The span at 174–183 (INGGGRGGYW) shows a compositional bias: gly residues. Positions 193–202 (QQQRRRKKRL) are enriched in basic residues. Over residues 206–220 (ETDDDGNEGEDDDGM) the composition is skewed to acidic residues. DNA-binding regions lie at residues 234–238 (REHPF), 303–310 (NKPKMRHY), and 374–377 (YVPT).

This sequence belongs to the FLO/LFY family. Acts in the floral primordia.

The protein resides in the nucleus. In terms of biological role, controls floral meristem identity. Is required very early in flower development and may act here as a transcription factor. This Brassica oleracea var. botrytis (Cauliflower) protein is Putative transcription factor BOFH.